The chain runs to 110 residues: UPF0339 protein SO_3888 (110 aa).

2 repeat units span residues 10–58 (SSND…RYAK) and 61–109 (AKND…IKDL).

The protein belongs to the UPF0339 family. Duplicated subfamily.

This chain is UPF0339 protein SO_3888, found in Shewanella oneidensis (strain ATCC 700550 / JCM 31522 / CIP 106686 / LMG 19005 / NCIMB 14063 / MR-1).